The chain runs to 234 residues: Large ribosomal subunit protein uL1 (234 aa).

This sequence belongs to the universal ribosomal protein uL1 family. Part of the 50S ribosomal subunit.

In terms of biological role, binds directly to 23S rRNA. The L1 stalk is quite mobile in the ribosome, and is involved in E site tRNA release. Functionally, protein L1 is also a translational repressor protein, it controls the translation of the L11 operon by binding to its mRNA. The chain is Large ribosomal subunit protein uL1 from Salmonella gallinarum (strain 287/91 / NCTC 13346).